The primary structure comprises 404 residues: XK-related protein 8 (404 aa).

8 helical membrane-spanning segments follow: residues Phe-14 to Leu-34, Val-44 to Phe-64, Ala-169 to Tyr-189, Leu-209 to Cys-229, Val-232 to Ala-252, Ser-262 to Phe-282, Ser-293 to Cys-313, and Ala-324 to Leu-344.

The protein belongs to the XK family.

It is found in the cell membrane. The catalysed reaction is a 1,2-diacyl-sn-glycero-3-phospho-L-serine(in) = a 1,2-diacyl-sn-glycero-3-phospho-L-serine(out). Its function is as follows. Phospholipid scramblase that promotes phosphatidylserine exposure on apoptotic cell surface, possibly by mediating phospholipid scrambling. Phosphatidylserine is a specific marker only present at the surface of apoptotic cells and acts as a specific signal for engulfment. The chain is XK-related protein 8 from Gasterosteus aculeatus (Three-spined stickleback).